Here is a 98-residue protein sequence, read N- to C-terminus: NADH-ubiquinone oxidoreductase chain 4L (98 aa).

The next 3 helical transmembrane spans lie at Met1–Met21, Ser29–Leu49, and Ile61–Val81.

This sequence belongs to the complex I subunit 4L family. Core subunit of respiratory chain NADH dehydrogenase (Complex I) which is composed of 45 different subunits.

The protein localises to the mitochondrion inner membrane. The catalysed reaction is a ubiquinone + NADH + 5 H(+)(in) = a ubiquinol + NAD(+) + 4 H(+)(out). Core subunit of the mitochondrial membrane respiratory chain NADH dehydrogenase (Complex I) which catalyzes electron transfer from NADH through the respiratory chain, using ubiquinone as an electron acceptor. Part of the enzyme membrane arm which is embedded in the lipid bilayer and involved in proton translocation. The sequence is that of NADH-ubiquinone oxidoreductase chain 4L (MT-ND4L) from Muntiacus vuquangensis (Giant muntjac).